The chain runs to 239 residues: Pathogenesis-related protein 5 (239 aa).

The N-terminal stretch at 1–23 is a signal peptide; sequence MANISSIHILFLVFITSGIAVMA. Cystine bridges form between Cys32/Cys238, Cys79/Cys89, Cys94/Cys99, Cys146/Cys228, Cys151/Cys211, Cys159/Cys174, Cys178/Cys187, and Cys188/Cys198.

It belongs to the thaumatin family.

The protein localises to the secreted. It is found in the extracellular space. Its subcellular location is the apoplast. Functionally, partially responsible for acquired pathogen resistance. The polypeptide is Pathogenesis-related protein 5 (Arabidopsis thaliana (Mouse-ear cress)).